Reading from the N-terminus, the 190-residue chain is Lysozyme g (190 aa).

The span at 1–10 shows a compositional bias: basic and acidic residues; sequence MPYGKIEDIK. Positions 1–31 are disordered; that stretch reads MPYGKIEDIKTSGASDVTAAQDGLKEGGWKS. Catalysis depends on residues glutamate 71 and aspartate 84.

Belongs to the glycosyl hydrolase 23 family.

It carries out the reaction Hydrolysis of (1-&gt;4)-beta-linkages between N-acetylmuramic acid and N-acetyl-D-glucosamine residues in a peptidoglycan and between N-acetyl-D-glucosamine residues in chitodextrins.. In Takifugu rubripes (Japanese pufferfish), this protein is Lysozyme g.